The sequence spans 273 residues: SPRY domain-containing SOCS box protein 4 (273 aa).

The region spanning 34-233 (PARLDQLLDM…MRYINGLDPE (200 aa)) is the B30.2/SPRY domain. One can recognise an SOCS box domain in the interval 234 to 273 (PLPLMDLCRRSIRSALGRQRLRDIGSLPLPQSLKNYLQYQ).

This sequence belongs to the SPSB family. Component of the probable ECS(SPSB4) E3 ubiquitin-protein ligase complex which contains CUL5, RNF7/RBX2, Elongin BC complex and SPSB4. Interacts with CUL5; RNF7; ELOB and ELOC. Interacts with MET. Interacts (via B30.2/SPRY domain) with PAWR; this interaction occurs in association with the Elongin BC complex. Interacts with NOS2. Interacts with EPHB2.

It is found in the cytoplasm. Its subcellular location is the cytosol. Its pathway is protein modification; protein ubiquitination. Functionally, substrate recognition component of a SCF-like ECS (Elongin BC-CUL2/5-SOCS-box protein) E3 ubiquitin-protein ligase complex which mediates the ubiquitination and subsequent proteasomal degradation of target proteins. Negatively regulates nitric oxide (NO) production and limits cellular toxicity in activated macrophages by mediating the ubiquitination and proteasomal degradation of NOS2. Acts as a bridge which links NOS2 with the ECS E3 ubiquitin ligase complex components ELOC and CUL5. Diminishes EphB2-dependent cell repulsive responses by mediating the ubiquitination and degradation of the EphB2/CTF2. Regulates cellular clock function by mediating ubiquitination and proteasomal degradation of the circadian transcriptional repressor NR1D1. The sequence is that of SPRY domain-containing SOCS box protein 4 (Spsb4) from Mus musculus (Mouse).